The chain runs to 670 residues: Receptor for retinol uptake stra6 (670 aa).

Over Met-1–Gly-38 the chain is Extracellular. The helical transmembrane segment at Leu-39–Ala-59 threads the bilayer. At Arg-60–Lys-87 the chain is on the cytoplasmic side. The chain crosses the membrane as a helical span at residues Gly-88–His-108. Topologically, residues His-109–Glu-121 are extracellular. The chain crosses the membrane as a helical span at residues Phe-122–Gly-142. Topologically, residues Thr-143 to His-145 are cytoplasmic. The helical transmembrane segment at Asn-146–Trp-166 threads the bilayer. The Extracellular segment spans residues Gln-167 to Ala-182. A helical transmembrane segment spans residues Leu-183–Leu-203. The Cytoplasmic segment spans residues Leu-204–Lys-274. The helical transmembrane segment at Leu-275–Ser-295 threads the bilayer. Topologically, residues Gly-296 to Val-346 are extracellular. The chain crosses the membrane as a helical span at residues Ser-347–His-367. At Arg-368 to Gly-401 the chain is on the cytoplasmic side. The helical transmembrane segment at Phe-402–Phe-422 threads the bilayer. At Ile-423–Trp-452 the chain is on the extracellular side. The helical transmembrane segment at Pro-453 to Phe-473 threads the bilayer. At Ile-474–Ser-488 the chain is on the cytoplasmic side. Residues Leu-489–Leu-526 constitute an intramembrane region (helical). Over Asp-527–Asn-670 the chain is Cytoplasmic. The segment at Val-600 to Arg-626 is interaction with calmodulin. The disordered stretch occupies residues Gly-640–Asn-670. A compositionally biased stretch (basic and acidic residues) spans Thr-645 to Glu-664.

Homodimer. Interacts (via C-terminus) with calmodulin.

The protein resides in the cell membrane. Functionally, retinol transporter. Accepts retinol from the extracellular retinol-binding protein rbp4, mediates retinol transport across the cell membrane, and then transmits retinol to the cytoplasmic retinol-binding protein rbp1. Required for normal vitamin A homeostasis. This is Receptor for retinol uptake stra6 from Danio rerio (Zebrafish).